A 443-amino-acid chain; its full sequence is Histone deacetylase 10, chloroplastic (443 aa).

Residues 1 to 65 (MEQLWVPSLP…PSHNGTSISD (65 aa)) constitute a chloroplast transit peptide. The tract at residues 82-412 (DAHILYCTSP…FRAFLGEPSL (331 aa)) is histone deacetylase. The Proton donor/acceptor role is filled by H222. Zn(2+) is bound by residues D259, H261, and D346.

The protein belongs to the histone deacetylase family. Zn(2+) serves as cofactor. As to expression, expressed in leaves. Expressed in coleoptiles, leaves, flag leaves and flowers. Expressed at low levels in roots.

The protein resides in the plastid. It is found in the chloroplast. It localises to the mitochondrion. It catalyses the reaction N-acetylserotonin + H2O = serotonin + acetate. The enzyme catalyses N-acetyltyramine + H2O = tyramine + acetate. It carries out the reaction N-acetyltryptamine + H2O = tryptamine + acetate. The catalysed reaction is melatonin + H2O = 5-methoxytryptamine + acetate. Its activity is regulated as follows. The activity of this enzyme is not inhibited by butyrate, a well-known histone deacetylase inhibitor. Its function is as follows. Involved in the regulation of melatonin biosynthesis by catalyzing the deacetylation of N-acetylserotonin to produce serotonin. N-acetylserotonin is methylated by acetylserotonin O-methyltransferase (ASMT) to produce melatonin (N-acetyl-5-methoxytryptamine). Deacetylates melatonin to produce 5-methoxytryptamine. In vitro, deacetylates N-acetyltyramine and N-acetyltryptamine to produce tyramine and tryptamine, respectively. The protein is Histone deacetylase 10, chloroplastic of Oryza sativa subsp. japonica (Rice).